A 491-amino-acid polypeptide reads, in one-letter code: Katanin p60 ATPase-containing subunit A1 (491 aa).

The interaction with KATNB1 stretch occupies residues 1–29 (MSLLMITENVKLAREYALLGNYDSAMVYY). Residues 1-75 (MSLLMITENV…VKEIMKTLES (75 aa)) form an interaction with dynein and NDEL1 region. The segment at 1–185 (MSLLMITENV…EPEANKFDST (185 aa)) is interaction with microtubules. Phosphoserine; by DYRK2 is present on Ser42. Residues 87–183 (QHELPSSEGE…VTEPEANKFD (97 aa)) are disordered. Over residues 145–169 (HSDRGKAVRSREKKEQSKGREEKNK) the composition is skewed to basic and acidic residues. 249-256 (GPPGTGKT) is a binding site for ATP.

It belongs to the AAA ATPase family. Katanin p60 subunit A1 subfamily. As to quaternary structure, can homooligomerize into hexameric rings, which may be promoted by interaction with microtubules. Interacts with KATNB1, which may serve as a targeting subunit. Interacts with ASPM; the katanin complex formation KATNA1:KATNB1 is required for the association of ASPM. Interacts with dynein and NDEL1. Associates with the E3 ligase complex containing DYRK2, EDD/UBR5, DDB1 and DCAF1 proteins (EDVP complex). Interacts with KLHL42 (via the kelch domains). Interacts with CUL3; the interaction is enhanced by KLHL42. Interacts with KATNB1 and KATNBL1. In terms of processing, phosphorylation by DYRK2 triggers ubiquitination and subsequent degradation. Post-translationally, ubiquitinated by the BCR(KLHL42) E3 ubiquitin ligase complex, leading to its proteasomal degradation. Ubiquitinated by the EDVP E3 ligase complex and subsequently targeted for proteasomal degradation.

It is found in the cytoplasm. The protein resides in the midbody. It localises to the cytoskeleton. The protein localises to the microtubule organizing center. Its subcellular location is the centrosome. It is found in the spindle pole. The protein resides in the spindle. It carries out the reaction n ATP + n H2O + a microtubule = n ADP + n phosphate + (n+1) alpha/beta tubulin heterodimers.. Its activity is regulated as follows. ATPase activity is stimulated by microtubules, which promote homooligomerization. ATP-dependent microtubule severing is stimulated by interaction with KATNB1. Functionally, catalytic subunit of a complex which severs microtubules in an ATP-dependent manner. Microtubule severing may promote rapid reorganization of cellular microtubule arrays and the release of microtubules from the centrosome following nucleation. Microtubule release from the mitotic spindle poles may allow depolymerization of the microtubule end proximal to the spindle pole, leading to poleward microtubule flux and poleward motion of chromosome. Microtubule release within the cell body of neurons may be required for their transport into neuronal processes by microtubule-dependent motor proteins. This transport is required for axonal growth. The protein is Katanin p60 ATPase-containing subunit A1 (Katna1) of Rattus norvegicus (Rat).